A 382-amino-acid polypeptide reads, in one-letter code: Leucine carboxyl methyltransferase 1 (382 aa).

Residues 1 to 11 show a composition bias toward polar residues; that stretch reads MSAPQIPNLNT. Positions 1-45 are disordered; it reads MSAPQIPNLNTLRRGGGRGRFRARGGPDSSSSSGNKDRVVQGTDN. Residues Arg88, Gly121, Asp146, 193–194, and Glu230 each bind S-adenosyl-L-methionine; that span reads DL.

Belongs to the methyltransferase superfamily. LCMT family.

It carries out the reaction [phosphatase 2A protein]-C-terminal L-leucine + S-adenosyl-L-methionine = [phosphatase 2A protein]-C-terminal L-leucine methyl ester + S-adenosyl-L-homocysteine. Its function is as follows. Methylates the carboxyl group of the C-terminal leucine residue of protein phosphatase 2A catalytic subunits to form alpha-leucine ester residues. The sequence is that of Leucine carboxyl methyltransferase 1 (ppm1) from Emericella nidulans (strain FGSC A4 / ATCC 38163 / CBS 112.46 / NRRL 194 / M139) (Aspergillus nidulans).